A 288-amino-acid polypeptide reads, in one-letter code: Acetyl-coenzyme A carboxylase carboxyl transferase subunit beta (288 aa).

A CoA carboxyltransferase N-terminal domain is found at 30–288 (IMTKCPKCKK…KMHQEVKTNA (259 aa)). Zn(2+)-binding residues include cysteine 34, cysteine 37, cysteine 53, and cysteine 56. The C4-type zinc-finger motif lies at 34 to 56 (CPKCKKIMYTKELAENLNVCFNC).

This sequence belongs to the AccD/PCCB family. Acetyl-CoA carboxylase is a heterohexamer composed of biotin carboxyl carrier protein (AccB), biotin carboxylase (AccC) and two subunits each of ACCase subunit alpha (AccA) and ACCase subunit beta (AccD). The cofactor is Zn(2+).

The protein resides in the cytoplasm. It catalyses the reaction N(6)-carboxybiotinyl-L-lysyl-[protein] + acetyl-CoA = N(6)-biotinyl-L-lysyl-[protein] + malonyl-CoA. Its pathway is lipid metabolism; malonyl-CoA biosynthesis; malonyl-CoA from acetyl-CoA: step 1/1. Component of the acetyl coenzyme A carboxylase (ACC) complex. Biotin carboxylase (BC) catalyzes the carboxylation of biotin on its carrier protein (BCCP) and then the CO(2) group is transferred by the transcarboxylase to acetyl-CoA to form malonyl-CoA. The polypeptide is Acetyl-coenzyme A carboxylase carboxyl transferase subunit beta (Staphylococcus saprophyticus subsp. saprophyticus (strain ATCC 15305 / DSM 20229 / NCIMB 8711 / NCTC 7292 / S-41)).